Consider the following 107-residue polypeptide: Phosphoribosyl-ATP pyrophosphatase (107 aa).

Belongs to the PRA-PH family.

It is found in the cytoplasm. It catalyses the reaction 1-(5-phospho-beta-D-ribosyl)-ATP + H2O = 1-(5-phospho-beta-D-ribosyl)-5'-AMP + diphosphate + H(+). It participates in amino-acid biosynthesis; L-histidine biosynthesis; L-histidine from 5-phospho-alpha-D-ribose 1-diphosphate: step 2/9. This is Phosphoribosyl-ATP pyrophosphatase from Bacillus cereus (strain G9842).